The primary structure comprises 340 residues: uncharacterized protein (340 aa).

An RING-CH-type zinc finger spans residues 6–70 (KYEKSSARCW…PQCLTAYRIA (65 aa)). Residues Cys-14, Cys-17, Cys-37, Cys-39, His-44, Cys-47, Cys-60, and Cys-63 each contribute to the Zn(2+) site. 3 consecutive transmembrane segments (helical) span residues 249–269 (EFWI…TKIL), 274–294 (PILL…GNFT), and 300–320 (IIGA…FIAW).

The protein resides in the membrane. This is an uncharacterized protein from Schizosaccharomyces pombe (strain 972 / ATCC 24843) (Fission yeast).